Reading from the N-terminus, the 209-residue chain is NAD(P)H dehydrogenase (quinone) (209 aa).

The Flavodoxin-like domain occupies 4–199; it reads VNIIFHSVHA…EMARYQGRHV (196 aa). Residues 10–15 and 87–89 each bind FMN; these read SVHAHI and TRY. Trp107 contacts substrate. FMN is bound by residues 122–128 and His143; that span reads SSGTQHG.

Belongs to the WrbA family. FMN serves as cofactor.

The catalysed reaction is a quinone + NADH + H(+) = a quinol + NAD(+). The enzyme catalyses a quinone + NADPH + H(+) = a quinol + NADP(+). The chain is NAD(P)H dehydrogenase (quinone) from Methanosarcina mazei (strain ATCC BAA-159 / DSM 3647 / Goe1 / Go1 / JCM 11833 / OCM 88) (Methanosarcina frisia).